A 101-amino-acid polypeptide reads, in one-letter code: Small ribosomal subunit protein bS18c (101 aa).

Belongs to the bacterial ribosomal protein bS18 family. In terms of assembly, part of the 30S ribosomal subunit.

The protein resides in the plastid. Its subcellular location is the chloroplast. The sequence is that of Small ribosomal subunit protein bS18c from Eucalyptus globulus subsp. globulus (Tasmanian blue gum).